The following is a 157-amino-acid chain: Ribosome-binding factor A (157 aa).

The segment at 126–157 is disordered; it reads RARATAQYAGDADPYKHDDEPSDDFEDDSDEE. Positions 145–157 are enriched in acidic residues; the sequence is EPSDDFEDDSDEE.

It belongs to the RbfA family. As to quaternary structure, monomer. Binds 30S ribosomal subunits, but not 50S ribosomal subunits or 70S ribosomes.

The protein localises to the cytoplasm. Its function is as follows. One of several proteins that assist in the late maturation steps of the functional core of the 30S ribosomal subunit. Associates with free 30S ribosomal subunits (but not with 30S subunits that are part of 70S ribosomes or polysomes). Required for efficient processing of 16S rRNA. May interact with the 5'-terminal helix region of 16S rRNA. In Bifidobacterium longum (strain DJO10A), this protein is Ribosome-binding factor A.